We begin with the raw amino-acid sequence, 288 residues long: Methyltransferase ucsB (288 aa).

S-adenosyl-L-methionine is bound by residues D87 and 121–122 (DA).

This sequence belongs to the class I-like SAM-binding methyltransferase superfamily.

Its pathway is mycotoxin biosynthesis. Its function is as follows. Methyltransferase; part of the gene cluster that mediates the biosynthesis of UCS1025A, a member of the pyrrolizidinone family that acts as a strong telomerase inhibitor and displays potent antibacterial and antitumor properties. These compounds share a hemiaminal-containing pyrrolizidinone core fused with a gamma-lactone, giving a furopyrrolizidine that is connected to a decalin fragment. The polyketide synthase module (PKS) of the PKS-NRPS ucsA is responsible for the synthesis of the polyketide backbone via the condensation of an acetyl-CoA starter unit with 6 malonyl-CoA units. The downstream nonribosomal peptide synthetase (NRPS) module then amidates the carboxyl end of the polyketide with a 2S,3S-methylproline derived from L-isoleucine by the 2-oxoglutarate-dependent dioxygenase ucsF which converts L-isoleucine to (4S,5S)-4-methylpyrroline-5-carboxylate that is further converted to 2S,3S-methylproline by the pyrroline-5-carboxylate reductase ucsG. Reductive release of the completed aminoacyl polyketide from the assembly line can form the 3-pyrrolin-2-one structure via an intramolecular Knoevenagel reaction. Because ucsA lacks a designated enoylreductase (ER) domain, the required activity is provided the enoyl reductase ucsL. This keto acyclic precursor is the substrate of the Diels-Alderase ucsH, that catalyzes the Diels-Alder cycloaddition. Oxidation of the 3S-methyl group to a carboxylate by the cytochrome P450 monooxygenase ucsK allows an oxa-Michael cyclization that might involve the reductase/dehydrogenase ucsI and which furnishes the furopyrrolizidine. The oxidase ucsJ likely plays a critical role in stereoselective reduction of the C5-C6 double bond to afford the required R-configured carboxylate group. Further enolization and oxidation at C5 by an unidentified enzyme affords the last intermediate that can undergo oxa-Michael cyclization to yield UCS1025A. This is Methyltransferase ucsB from Acremonium sp.